Here is a 637-residue protein sequence, read N- to C-terminus: tRNA uridine 5-carboxymethylaminomethyl modification enzyme MnmG (637 aa).

FAD-binding positions include 15–20 (GAGHAG), valine 127, and serine 182. 274–288 (GPRYCPSIEDKVVRF) lines the NAD(+) pocket. Residue glutamine 371 participates in FAD binding.

This sequence belongs to the MnmG family. Homodimer. Heterotetramer of two MnmE and two MnmG subunits. Requires FAD as cofactor.

The protein resides in the cytoplasm. In terms of biological role, NAD-binding protein involved in the addition of a carboxymethylaminomethyl (cmnm) group at the wobble position (U34) of certain tRNAs, forming tRNA-cmnm(5)s(2)U34. This chain is tRNA uridine 5-carboxymethylaminomethyl modification enzyme MnmG, found in Heliobacterium modesticaldum (strain ATCC 51547 / Ice1).